A 135-amino-acid chain; its full sequence is UPF0306 protein C8J_1355 (135 aa).

The protein belongs to the UPF0306 family.

The sequence is that of UPF0306 protein C8J_1355 from Campylobacter jejuni subsp. jejuni serotype O:6 (strain 81116 / NCTC 11828).